A 178-amino-acid polypeptide reads, in one-letter code: Large ribosomal subunit protein uL6 (178 aa).

Belongs to the universal ribosomal protein uL6 family. As to quaternary structure, part of the 50S ribosomal subunit.

In terms of biological role, this protein binds to the 23S rRNA, and is important in its secondary structure. It is located near the subunit interface in the base of the L7/L12 stalk, and near the tRNA binding site of the peptidyltransferase center. This is Large ribosomal subunit protein uL6 from Levilactobacillus brevis (strain ATCC 367 / BCRC 12310 / CIP 105137 / JCM 1170 / LMG 11437 / NCIMB 947 / NCTC 947) (Lactobacillus brevis).